Consider the following 210-residue polypeptide: Probable nicotinate-nucleotide adenylyltransferase (210 aa).

This sequence belongs to the NadD family.

The catalysed reaction is nicotinate beta-D-ribonucleotide + ATP + H(+) = deamido-NAD(+) + diphosphate. The protein operates within cofactor biosynthesis; NAD(+) biosynthesis; deamido-NAD(+) from nicotinate D-ribonucleotide: step 1/1. Functionally, catalyzes the reversible adenylation of nicotinate mononucleotide (NaMN) to nicotinic acid adenine dinucleotide (NaAD). This is Probable nicotinate-nucleotide adenylyltransferase from Streptococcus pyogenes serotype M18 (strain MGAS8232).